Reading from the N-terminus, the 138-residue chain is MTRINLTLVSELADQHLMAEYRELPRVFGAVRKHVANGKRVRDFKISPTFILGAGHVTFFYDKLEFLRKRQIELIAECLKRGFNIKDTTVQDISDIPQEFRGDYIPHEASIAISQARLDEKIAQRPTWYKYYGKAIYA.

Catalysis depends on threonine 2, which acts as the Nucleophile; via amide nitrogen. Glutamate 23 (proton acceptor) is an active-site residue.

As to quaternary structure, monomer.

The enzyme catalyses Cleaves the N-glycosidic bond between the 5'-pyrimidine residue in cyclobutadipyrimidine (in DNA) and the corresponding deoxy-D-ribose residue.. It catalyses the reaction 2'-deoxyribonucleotide-(2'-deoxyribose 5'-phosphate)-2'-deoxyribonucleotide-DNA = a 3'-end 2'-deoxyribonucleotide-(2,3-dehydro-2,3-deoxyribose 5'-phosphate)-DNA + a 5'-end 5'-phospho-2'-deoxyribonucleoside-DNA + H(+). Participates in the repair of UV-damaged DNA by excising pyrimidine dimers that are the major UV-lesions. DNA glycosylase activity hydrolyzes the glycosylic bond of the 5' pyrimidine of the dimer. This leaves apurinic/apyrimidic (AP) sites in the DNA. These AP sites are removed by the AP lyase activity which cleaves the intrapyrimidine phosphodiester bond. Catalysis proceeds via a protonated imine covalent intermediate between the alpha-amino group of the N-terminal threonine residue and the C1' of the deoxyribose sugar of the 5' pyrimidine at the dimer site. In Enterobacteria phage T4 (Bacteriophage T4), this protein is Endonuclease V.